We begin with the raw amino-acid sequence, 675 residues long: Methionine--tRNA ligase (675 aa).

The 'HIGH' region signature appears at 15–25 (PYANGSIHLGH). Zn(2+) is bound by residues C146, C149, C159, and C162. Positions 332–336 (KMSKS) match the 'KMSKS' region motif. Residue K335 participates in ATP binding. Positions 573 to 675 (DFAKVDMRIA…SGAQPGMQVK (103 aa)) constitute a tRNA-binding domain.

The protein belongs to the class-I aminoacyl-tRNA synthetase family. MetG type 1 subfamily. As to quaternary structure, homodimer. Requires Zn(2+) as cofactor.

Its subcellular location is the cytoplasm. The catalysed reaction is tRNA(Met) + L-methionine + ATP = L-methionyl-tRNA(Met) + AMP + diphosphate. Its function is as follows. Is required not only for elongation of protein synthesis but also for the initiation of all mRNA translation through initiator tRNA(fMet) aminoacylation. The sequence is that of Methionine--tRNA ligase from Yersinia pseudotuberculosis serotype O:1b (strain IP 31758).